A 391-amino-acid polypeptide reads, in one-letter code: Multidrug resistance protein MdtL (391 aa).

Over 1–3 (MSR) the chain is Cytoplasmic. The chain crosses the membrane as a helical span at residues 4–24 (FLICSFALVLLYPAGIDMYLV). Topologically, residues 25–37 (GLPRIAADLNASE) are periplasmic. A helical membrane pass occupies residues 38–58 (AQLHIAFSVYLAGMAAAMLFA). The Cytoplasmic portion of the chain corresponds to 59–75 (GKMADRSGRKPVAIPGS). A helical membrane pass occupies residues 76 to 96 (ALFIIASVFCSLAETSTLFLA). Residues 97–98 (GR) lie on the Periplasmic side of the membrane. The chain crosses the membrane as a helical span at residues 99-119 (FLQGLGAGCCYVVAFAILRDT). The Cytoplasmic portion of the chain corresponds to 120-130 (LDDRRRAKVLS). A helical membrane pass occupies residues 131 to 151 (LLNGITCIIPVLAPVLGHLIM). Over 152–157 (LKFPWQ) the chain is Periplasmic. Residues 158–178 (SLFWAMAMMGIAVLMLSLFIL) form a helical membrane-spanning segment. Residues 179-202 (KETRPASPAASDKPRENSESLLNR) are Cytoplasmic-facing. The chain crosses the membrane as a helical span at residues 203-222 (FFLSRVVITTLSVSVILTFV). The Periplasmic portion of the chain corresponds to 223–244 (NTSPVLLMEIMGFERGEYATIM). The helical transmembrane segment at 245-265 (ALTAGVSMTFSFSTPFALGIF) threads the bilayer. The Cytoplasmic portion of the chain corresponds to 266 to 268 (KPR). The helical transmembrane segment at 269 to 289 (TLMITSQVLFLAAGITLAVSP) threads the bilayer. Topologically, residues 290 to 292 (SHA) are periplasmic. The helical transmembrane segment at 293 to 313 (VSLFGITLICAGFSVGFGVAM) threads the bilayer. Topologically, residues 314–330 (SQALGPFSLRAGVASST) are cytoplasmic. Residues 331 to 351 (LGIAQVCGSSLWIWLAAVVGI) form a helical membrane-spanning segment. At 352–355 (GAWN) the chain is on the periplasmic side. Residues 356–376 (MLIGILIACSIVSLLLIMFVA) traverse the membrane as a helical segment. Topologically, residues 377 to 391 (PGRPVAAHEEIHHHA) are cytoplasmic.

It belongs to the major facilitator superfamily. DHA1 family. MdtL (TC 2.A.1.2.22) subfamily.

The protein localises to the cell inner membrane. This chain is Multidrug resistance protein MdtL, found in Shigella flexneri serotype 5b (strain 8401).